The primary structure comprises 392 residues: Formate-dependent phosphoribosylglycinamide formyltransferase (392 aa).

N(1)-(5-phospho-beta-D-ribosyl)glycinamide is bound by residues 20 to 21 and glutamate 80; that span reads EL. ATP-binding positions include arginine 112, lysine 153, 158–163, 193–196, and glutamate 201; these read SSGKGQ and EGFV. An ATP-grasp domain is found at 117-306; the sequence is RLAAEELGLP…EFALHVRAIL (190 aa). Residues glutamate 265 and glutamate 277 each contribute to the Mg(2+) site. N(1)-(5-phospho-beta-D-ribosyl)glycinamide contacts are provided by residues aspartate 284, lysine 355, and 362–363; that span reads RR.

This sequence belongs to the PurK/PurT family. Homodimer.

It catalyses the reaction N(1)-(5-phospho-beta-D-ribosyl)glycinamide + formate + ATP = N(2)-formyl-N(1)-(5-phospho-beta-D-ribosyl)glycinamide + ADP + phosphate + H(+). It functions in the pathway purine metabolism; IMP biosynthesis via de novo pathway; N(2)-formyl-N(1)-(5-phospho-D-ribosyl)glycinamide from N(1)-(5-phospho-D-ribosyl)glycinamide (formate route): step 1/1. In terms of biological role, involved in the de novo purine biosynthesis. Catalyzes the transfer of formate to 5-phospho-ribosyl-glycinamide (GAR), producing 5-phospho-ribosyl-N-formylglycinamide (FGAR). Formate is provided by PurU via hydrolysis of 10-formyl-tetrahydrofolate. The sequence is that of Formate-dependent phosphoribosylglycinamide formyltransferase from Aeromonas salmonicida (strain A449).